Here is a 286-residue protein sequence, read N- to C-terminus: MPELPEVEVVRRGLHHHLVGKTIASTLVYHERAVRRQSGGAVELAGLLAGQQISGTGRRGKYLWLTLEGSSGAQALVVHLGMSGQMLIGPISRPQHLRIAATLDDGSVLSFVDQRTFGGWMVTDLVTVDGSELPEPVAHIARDPLDELFEIGAVVTRLRGKHTEIKRALLDQTVVSGVGNIYADEALWQARVHGRRLTDGMSRAKLTEVLDSAAAVMRLALAQGGTSFDDLYVNVNGESGYFDRSLEAYGREGEPCRRCGRAMRREAFMNRSSYFCPSCQRLVEPR.

Catalysis depends on Pro2, which acts as the Schiff-base intermediate with DNA. The active-site Proton donor is Glu3. Catalysis depends on Lys61, which acts as the Proton donor; for beta-elimination activity. DNA-binding residues include His96, Arg115, and Lys161. Residues 247-281 form an FPG-type zinc finger; that stretch reads EAYGREGEPCRRCGRAMRREAFMNRSSYFCPSCQR. The active-site Proton donor; for delta-elimination activity is Arg271.

The protein belongs to the FPG family. As to quaternary structure, monomer. Zn(2+) is required as a cofactor.

It carries out the reaction Hydrolysis of DNA containing ring-opened 7-methylguanine residues, releasing 2,6-diamino-4-hydroxy-5-(N-methyl)formamidopyrimidine.. The catalysed reaction is 2'-deoxyribonucleotide-(2'-deoxyribose 5'-phosphate)-2'-deoxyribonucleotide-DNA = a 3'-end 2'-deoxyribonucleotide-(2,3-dehydro-2,3-deoxyribose 5'-phosphate)-DNA + a 5'-end 5'-phospho-2'-deoxyribonucleoside-DNA + H(+). Its function is as follows. Involved in base excision repair of DNA damaged by oxidation or by mutagenic agents. Acts as a DNA glycosylase that recognizes and removes damaged bases. Has a preference for oxidized purines, such as 7,8-dihydro-8-oxoguanine (8-oxoG). Has AP (apurinic/apyrimidinic) lyase activity and introduces nicks in the DNA strand. Cleaves the DNA backbone by beta-delta elimination to generate a single-strand break at the site of the removed base with both 3'- and 5'-phosphates. The polypeptide is Formamidopyrimidine-DNA glycosylase (Mycobacteroides abscessus (strain ATCC 19977 / DSM 44196 / CCUG 20993 / CIP 104536 / JCM 13569 / NCTC 13031 / TMC 1543 / L948) (Mycobacterium abscessus)).